A 173-amino-acid chain; its full sequence is MEYNTSALCDIYMDQVDVVEPMFSNFGGRASFAGQITTVKCFEDNALIRETLEQDGVGRVLLVDGGGSLRRALLDGELAAIAEENEWEGIVVYGCVREVDELEDMNIGIQALASIPVGAAMQGVGEVDVPVNFGGVTFLPEDYLYADTTGIILSQEPLSADLEEDEEEPELLD.

The protein belongs to the RraA family. As to quaternary structure, homotrimer. Binds to both RNA-binding sites in the C-terminal region of Rne and to RhlB.

It is found in the cytoplasm. In terms of biological role, globally modulates RNA abundance by binding to RNase E (Rne) and regulating its endonucleolytic activity. Can modulate Rne action in a substrate-dependent manner by altering the composition of the degradosome. Modulates RNA-binding and helicase activities of the degradosome. This chain is Regulator of ribonuclease activity A, found in Vibrio vulnificus (strain CMCP6).